The primary structure comprises 413 residues: Sulfoquinovose isomerase (413 aa).

6-sulfo-beta-D-quinovose-binding residues include arginine 55, tyrosine 111, asparagine 172, histidine 176, and arginine 238. Histidine 248 (proton donor/acceptor) is an active-site residue. Residues glutamate 251, glutamine 362, glutamine 379, and histidine 383 each coordinate 6-sulfo-beta-D-quinovose. Residue histidine 383 is the Proton donor/acceptor of the active site.

It belongs to the N-acylglucosamine 2-epimerase family. Homohexamer.

It carries out the reaction 6-sulfo-beta-D-quinovose = 6-deoxy-6-sulfo-D-fructose. The enzyme catalyses 6-sulfo-beta-D-quinovose = 6-sulfo-D-rhamnose. With respect to regulation, significantly inhibited by Cu(2+), Fe(3+) and Co(2+). Partially inhibited by Mg(2+), Ca(2+) and Mn(2+). Also inhibited by ATP, ADP, dATP, TTP and GTP. Functionally, catalyzes the isomerization of sulfoquinovose (SQ) to 6-deoxy-6-sulfo-D-fructose (SF). Can also catalyze the interconversion of SQ and sulforhamnose (SR). Has a clear preference for beta-SQ and little-to-no activity on alpha-SQ. In vitro, can also catalyze the interconversion of mannose, fructose and glucose, or lyxose and xylulose, but has extremely low activity with glucose. The polypeptide is Sulfoquinovose isomerase (yihS) (Escherichia coli (strain K12)).